A 508-amino-acid polypeptide reads, in one-letter code: p-aminobenzoyl-glutamate transport protein (508 aa).

The next 13 helical transmembrane spans lie at F30–F50, F85–E105, V121–I139, S140–V159, V164–I184, I211–I231, G261–I281, G303–T323, M343–S363, L382–I402, G405–F425, S439–Q459, and L479–I499.

It localises to the cell inner membrane. It carries out the reaction N-(4-aminobenzoyl)-L-glutamate(in) + H(+)(in) = N-(4-aminobenzoyl)-L-glutamate(out) + H(+)(out). Its activity is regulated as follows. Completely inhibited by 100 nM sodium azide and by the proton ionophore carbonyl cyanide m-chlorophenylhydrazone (CCCP). Is also strongly inhibited by 100 mM potassium fluoride. In terms of biological role, essential for aminobenzoyl-glutamate utilization. It catalyzes the concentration-dependent uptake of p-aminobenzoyl-glutamate (PABA-GLU) into the cell and allows accumulation of PABA-GLU to a concentration enabling AbgAB to catalyze cleavage into p-aminobenzoate and glutamate. It also seems to increase the sensitivity to low levels of aminobenzoyl-glutamate. May actually serve physiologically as a transporter for some other molecule, perhaps a dipeptide, and that it transports p-aminobenzoyl-glutamate as a secondary activity. The physiological role of abgABT should be clarified. This is p-aminobenzoyl-glutamate transport protein from Escherichia coli (strain K12).